The sequence spans 438 residues: Enolase (438 aa).

Residue glutamine 163 participates in (2R)-2-phosphoglycerate binding. The active-site Proton donor is the glutamate 205. Positions 243, 292, and 319 each coordinate Mg(2+). (2R)-2-phosphoglycerate-binding residues include lysine 344, arginine 373, serine 374, and lysine 395. The active-site Proton acceptor is the lysine 344.

Belongs to the enolase family. The cofactor is Mg(2+).

It localises to the cytoplasm. It is found in the secreted. The protein resides in the cell surface. It carries out the reaction (2R)-2-phosphoglycerate = phosphoenolpyruvate + H2O. Its pathway is carbohydrate degradation; glycolysis; pyruvate from D-glyceraldehyde 3-phosphate: step 4/5. Catalyzes the reversible conversion of 2-phosphoglycerate (2-PG) into phosphoenolpyruvate (PEP). It is essential for the degradation of carbohydrates via glycolysis. The sequence is that of Enolase from Streptococcus agalactiae.